The following is a 454-amino-acid chain: Putative flavin-containing monoamine oxidase AofH (454 aa).

Belongs to the flavin monoamine oxidase family. It depends on FAD as a cofactor.

This is Putative flavin-containing monoamine oxidase AofH (aofH) from Mycobacterium tuberculosis (strain CDC 1551 / Oshkosh).